Reading from the N-terminus, the 242-residue chain is Carboxy-S-adenosyl-L-methionine synthase (242 aa).

S-adenosyl-L-methionine-binding positions include Tyr-38, 63–65 (GCS), 88–89 (DN), 116–117 (DL), and Arg-199.

The protein belongs to the class I-like SAM-binding methyltransferase superfamily. Cx-SAM synthase family. In terms of assembly, homodimer.

The catalysed reaction is prephenate + S-adenosyl-L-methionine = carboxy-S-adenosyl-L-methionine + 3-phenylpyruvate + H2O. Its function is as follows. Catalyzes the conversion of S-adenosyl-L-methionine (SAM) to carboxy-S-adenosyl-L-methionine (Cx-SAM). The polypeptide is Carboxy-S-adenosyl-L-methionine synthase (Methylococcus capsulatus (strain ATCC 33009 / NCIMB 11132 / Bath)).